Reading from the N-terminus, the 236-residue chain is Ubiquinone biosynthesis O-methyltransferase (236 aa).

Residues Arg39, Gly59, Asp80, and Met124 each coordinate S-adenosyl-L-methionine.

Belongs to the methyltransferase superfamily. UbiG/COQ3 family.

It catalyses the reaction a 3-demethylubiquinol + S-adenosyl-L-methionine = a ubiquinol + S-adenosyl-L-homocysteine + H(+). It carries out the reaction a 3-(all-trans-polyprenyl)benzene-1,2-diol + S-adenosyl-L-methionine = a 2-methoxy-6-(all-trans-polyprenyl)phenol + S-adenosyl-L-homocysteine + H(+). It functions in the pathway cofactor biosynthesis; ubiquinone biosynthesis. Its function is as follows. O-methyltransferase that catalyzes the 2 O-methylation steps in the ubiquinone biosynthetic pathway. In Shewanella baltica (strain OS223), this protein is Ubiquinone biosynthesis O-methyltransferase.